We begin with the raw amino-acid sequence, 398 residues long: Acetate kinase (398 aa).

Position 8 (N8) interacts with Mg(2+). Position 15 (K15) interacts with ATP. Residue R89 participates in substrate binding. The active-site Proton donor/acceptor is the D146. Residues 206–210, 283–285, and 331–335 each bind ATP; these read HIGNG, DMR, and GMGEN. Position 383 (E383) interacts with Mg(2+).

Belongs to the acetokinase family. As to quaternary structure, homodimer. Mg(2+) serves as cofactor. Mn(2+) is required as a cofactor.

The protein resides in the cytoplasm. The catalysed reaction is acetate + ATP = acetyl phosphate + ADP. The protein operates within metabolic intermediate biosynthesis; acetyl-CoA biosynthesis; acetyl-CoA from acetate: step 1/2. Functionally, catalyzes the formation of acetyl phosphate from acetate and ATP. Can also catalyze the reverse reaction. This is Acetate kinase from Streptococcus pyogenes serotype M12 (strain MGAS2096).